We begin with the raw amino-acid sequence, 165 residues long: MYIEMVDETGQVSKEMLQQTQEILEFAAQKLGKEDKEMAVTFVTNERSHELNLEYRNTDRPTDVISLEYKPELEIAFDEEDLLENSELAEMMSEFDAYIGELFISIDKAHEQAEEYGHSFEREMGFLAVHGFLHINGYDHYTPEEEAEMFGLQEEILTAYGLTRQ.

Zn(2+) contacts are provided by histidine 130, histidine 134, and histidine 140.

This sequence belongs to the endoribonuclease YbeY family. It depends on Zn(2+) as a cofactor.

It is found in the cytoplasm. Functionally, single strand-specific metallo-endoribonuclease involved in late-stage 70S ribosome quality control and in maturation of the 3' terminus of the 16S rRNA. This Streptococcus pneumoniae serotype 4 (strain ATCC BAA-334 / TIGR4) protein is Endoribonuclease YbeY.